The chain runs to 337 residues: 5-formaminoimidazole-4-carboxamide-1-(beta)-D-ribofuranosyl 5'-monophosphate synthetase (337 aa).

Residues His23 and Ser87 each coordinate 5-amino-1-(5-phospho-beta-D-ribosyl)imidazole-4-carboxamide. An ATP-grasp domain is found at 121–328 (MRLLEYAGIP…IAHEIVNAVK (208 aa)). ATP is bound by residues 144 to 191 (PVIV…VPAY) and Glu213. Position 233 (Asn233) interacts with 5-amino-1-(5-phospho-beta-D-ribosyl)imidazole-4-carboxamide. Residues Glu272 and Glu285 each contribute to the Mg(2+) site.

This sequence belongs to the phosphohexose mutase family. The cofactor is Mg(2+). Mn(2+) serves as cofactor.

The catalysed reaction is 5-amino-1-(5-phospho-beta-D-ribosyl)imidazole-4-carboxamide + formate + ATP = 5-formamido-1-(5-phospho-D-ribosyl)imidazole-4-carboxamide + ADP + phosphate. It participates in purine metabolism; IMP biosynthesis via de novo pathway; 5-formamido-1-(5-phospho-D-ribosyl)imidazole-4-carboxamide from 5-amino-1-(5-phospho-D-ribosyl)imidazole-4-carboxamide (formate route): step 1/1. Its function is as follows. Catalyzes the ATP- and formate-dependent formylation of 5-aminoimidazole-4-carboxamide-1-beta-d-ribofuranosyl 5'-monophosphate (AICAR) to 5-formaminoimidazole-4-carboxamide-1-beta-d-ribofuranosyl 5'-monophosphate (FAICAR) in the absence of folates. This Caldivirga maquilingensis (strain ATCC 700844 / DSM 13496 / JCM 10307 / IC-167) protein is 5-formaminoimidazole-4-carboxamide-1-(beta)-D-ribofuranosyl 5'-monophosphate synthetase.